The chain runs to 359 residues: Glycerol-1-phosphate dehydrogenase [NAD(P)+] (359 aa).

Residues 107-111 and 129-132 contribute to the NAD(+) site; these read GRVID and TAAS. Residue Asp134 coordinates substrate. Residue Ser138 participates in NAD(+) binding. Substrate is bound at residue Asp181. Residues Asp181 and His261 each coordinate Zn(2+). Position 265 (His265) interacts with substrate. Position 277 (His277) interacts with Zn(2+).

Belongs to the glycerol-1-phosphate dehydrogenase family. Requires Zn(2+) as cofactor.

The protein resides in the cytoplasm. The catalysed reaction is sn-glycerol 1-phosphate + NAD(+) = dihydroxyacetone phosphate + NADH + H(+). The enzyme catalyses sn-glycerol 1-phosphate + NADP(+) = dihydroxyacetone phosphate + NADPH + H(+). Its pathway is membrane lipid metabolism; glycerophospholipid metabolism. Functionally, catalyzes the NAD(P)H-dependent reduction of dihydroxyacetonephosphate (DHAP or glycerone phosphate) to glycerol 1-phosphate (G1P). The G1P thus generated is used as the glycerophosphate backbone of phospholipids in the cellular membranes of Archaea. The polypeptide is Glycerol-1-phosphate dehydrogenase [NAD(P)+] (Methanospirillum hungatei JF-1 (strain ATCC 27890 / DSM 864 / NBRC 100397 / JF-1)).